Here is a 274-residue protein sequence, read N- to C-terminus: Diaminopimelate epimerase (274 aa).

Positions 11, 44, and 64 each coordinate substrate. The active-site Proton donor is the cysteine 73. Substrate is bound by residues 74 to 75, asparagine 157, asparagine 190, and 208 to 209; these read GN and ER. Cysteine 217 acts as the Proton acceptor in catalysis. Substrate is bound at residue 218–219; sequence GS.

This sequence belongs to the diaminopimelate epimerase family. In terms of assembly, homodimer.

The protein localises to the cytoplasm. It carries out the reaction (2S,6S)-2,6-diaminopimelate = meso-2,6-diaminopimelate. The protein operates within amino-acid biosynthesis; L-lysine biosynthesis via DAP pathway; DL-2,6-diaminopimelate from LL-2,6-diaminopimelate: step 1/1. Functionally, catalyzes the stereoinversion of LL-2,6-diaminopimelate (L,L-DAP) to meso-diaminopimelate (meso-DAP), a precursor of L-lysine and an essential component of the bacterial peptidoglycan. The sequence is that of Diaminopimelate epimerase from Haemophilus influenzae (strain PittGG).